We begin with the raw amino-acid sequence, 314 residues long: Porphobilinogen deaminase (314 aa).

At C234 the chain carries S-(dipyrrolylmethanemethyl)cysteine.

Belongs to the HMBS family. Monomer. It depends on dipyrromethane as a cofactor.

The catalysed reaction is 4 porphobilinogen + H2O = hydroxymethylbilane + 4 NH4(+). Its pathway is porphyrin-containing compound metabolism; protoporphyrin-IX biosynthesis; coproporphyrinogen-III from 5-aminolevulinate: step 2/4. Functionally, tetrapolymerization of the monopyrrole PBG into the hydroxymethylbilane pre-uroporphyrinogen in several discrete steps. This chain is Porphobilinogen deaminase, found in Mycobacterium ulcerans (strain Agy99).